The following is a 91-amino-acid chain: Probable Fe(2+)-trafficking protein (91 aa).

It belongs to the Fe(2+)-trafficking protein family. In terms of assembly, monomer.

Could be a mediator in iron transactions between iron acquisition and iron-requiring processes, such as synthesis and/or repair of Fe-S clusters in biosynthetic enzymes. This Klebsiella pneumoniae subsp. pneumoniae (strain ATCC 700721 / MGH 78578) protein is Probable Fe(2+)-trafficking protein.